Here is a 312-residue protein sequence, read N- to C-terminus: Glycerol-3-phosphate dehydrogenase [NAD(P)+] (312 aa).

The NADPH site is built by W11, R30, R31, and K95. Sn-glycerol 3-phosphate contacts are provided by K95, G123, and S125. An NADPH-binding site is contributed by A127. Sn-glycerol 3-phosphate contacts are provided by K177, D230, S240, R241, and N242. K177 functions as the Proton acceptor in the catalytic mechanism. Position 241 (R241) interacts with NADPH. NADPH-binding residues include V265 and E267.

It belongs to the NAD-dependent glycerol-3-phosphate dehydrogenase family.

It localises to the cytoplasm. The enzyme catalyses sn-glycerol 3-phosphate + NAD(+) = dihydroxyacetone phosphate + NADH + H(+). The catalysed reaction is sn-glycerol 3-phosphate + NADP(+) = dihydroxyacetone phosphate + NADPH + H(+). It functions in the pathway membrane lipid metabolism; glycerophospholipid metabolism. Its function is as follows. Catalyzes the reduction of the glycolytic intermediate dihydroxyacetone phosphate (DHAP) to sn-glycerol 3-phosphate (G3P), the key precursor for phospholipid synthesis. This is Glycerol-3-phosphate dehydrogenase [NAD(P)+] from Helicobacter pylori (strain Shi470).